A 198-amino-acid chain; its full sequence is Na(+)-translocating NADH-quinone reductase subunit E (198 aa).

6 helical membrane-spanning segments follow: residues 11-31 (SIFIENLALSFFLGMCTFLAV), 40-60 (GLGIAVVVVQAIAVPANNLVF), 77-97 (FLGFITYIGVIAALVQILEMF), 110-130 (GIFLPLITVNCAIFGGVSFMV), 140-160 (VVYGVGSGISWALAIVLMAAI), and 176-196 (LGITFITAGLMALGFMSFSGI).

This sequence belongs to the NqrDE/RnfAE family. Composed of six subunits; NqrA, NqrB, NqrC, NqrD, NqrE and NqrF.

Its subcellular location is the cell inner membrane. The enzyme catalyses a ubiquinone + n Na(+)(in) + NADH + H(+) = a ubiquinol + n Na(+)(out) + NAD(+). Its function is as follows. NQR complex catalyzes the reduction of ubiquinone-1 to ubiquinol by two successive reactions, coupled with the transport of Na(+) ions from the cytoplasm to the periplasm. NqrA to NqrE are probably involved in the second step, the conversion of ubisemiquinone to ubiquinol. This Tolumonas auensis (strain DSM 9187 / NBRC 110442 / TA 4) protein is Na(+)-translocating NADH-quinone reductase subunit E.